The following is a 533-amino-acid chain: Peptide chain release factor 3 (533 aa).

The region spanning 11–284 (RRRRTFAIIS…ALVGLSPEPL (274 aa)) is the tr-type G domain. Residues 20-27 (SHPDAGKT), 92-96 (DTPGH), and 146-149 (NKLD) contribute to the GTP site.

This sequence belongs to the TRAFAC class translation factor GTPase superfamily. Classic translation factor GTPase family. PrfC subfamily.

The protein localises to the cytoplasm. In terms of biological role, increases the formation of ribosomal termination complexes and stimulates activities of RF-1 and RF-2. It binds guanine nucleotides and has strong preference for UGA stop codons. It may interact directly with the ribosome. The stimulation of RF-1 and RF-2 is significantly reduced by GTP and GDP, but not by GMP. The sequence is that of Peptide chain release factor 3 from Ralstonia nicotianae (strain ATCC BAA-1114 / GMI1000) (Ralstonia solanacearum).